Reading from the N-terminus, the 252-residue chain is 3-dehydroquinate dehydratase (252 aa).

Residues Ser21, 46 to 48 (EWR), and Arg82 each bind 3-dehydroquinate. The Proton donor/acceptor role is filled by His143. Lys170 (schiff-base intermediate with substrate) is an active-site residue. Residues Arg213, Ser232, and Gln236 each coordinate 3-dehydroquinate.

It belongs to the type-I 3-dehydroquinase family. Homodimer.

It catalyses the reaction 3-dehydroquinate = 3-dehydroshikimate + H2O. The protein operates within metabolic intermediate biosynthesis; chorismate biosynthesis; chorismate from D-erythrose 4-phosphate and phosphoenolpyruvate: step 3/7. Functionally, involved in the third step of the chorismate pathway, which leads to the biosynthesis of aromatic amino acids. Catalyzes the cis-dehydration of 3-dehydroquinate (DHQ) and introduces the first double bond of the aromatic ring to yield 3-dehydroshikimate. This chain is 3-dehydroquinate dehydratase, found in Salmonella paratyphi A (strain ATCC 9150 / SARB42).